The primary structure comprises 197 residues: MSWGRLSRLLKPALLCGALAAPGLAGTMCASRDDWRCARSMHEFSAKDIDGHMVCLDKYRGFVCIVTNVASQUGKTDVNYTQLVDLHARYAECGLRILAFPCNQFGRQEPGSNQEIKEFAAGYNVKFDMYSKICVNGDDAHPLWKWMKVQPKGRGMLGNAIKWNFTKFLIDKNGCVVKRYGPMEEPQVIEKDLPCYL.

Ser-40 carries the phosphoserine modification. Sec-73 is a catalytic residue. A non-standard amino acid (selenocysteine) is located at residue Sec-73.

This sequence belongs to the glutathione peroxidase family. As to quaternary structure, monomer. Has a tendency to form higher mass oligomers. Interacts with FUNDC1; this interaction promotes GPX4 recruitment into mitochondria through TOM/TIM complex where it is degraded by mitophagy. Widely expressed with the highest levels in testis, heart, cerebrum, ileum, stomach, liver, jejunum and epididymis. Expressed primarily in testis and sperm midpiece (at protein level). Expressed in brain (at protein level). Expressed in heart, liver and kidney (at protein level). Expressed in retina, especially in inner segments of photoreceptor cells (at protein level). As to expression, highly expressed during embryogenesis. Down-regulated between 14.5 dpc and 17.5 dpc. In terms of tissue distribution, highly expressed during embryogenesis. In contrast to isoform Mitochondrial and isoform Nuclear, which are down-regulated between 14.5 dpc and 17.5 dpc, remains constant. Mainly expressed in sperm. Weakly expressed during embryogenesis. Down-regulated between 14.5 dpc and 17.5 dpc.

The protein localises to the mitochondrion. It localises to the cytoplasm. Its subcellular location is the nucleus. The catalysed reaction is a hydroperoxy polyunsaturated fatty acid + 2 glutathione = a hydroxy polyunsaturated fatty acid + glutathione disulfide + H2O. The enzyme catalyses 2 glutathione + H2O2 = glutathione disulfide + 2 H2O. It catalyses the reaction tert-butyl hydroperoxide + 2 glutathione = tert-butanol + glutathione disulfide + H2O. It carries out the reaction cumene hydroperoxide + 2 glutathione = 2-phenylpropan-2-ol + glutathione disulfide + H2O. The catalysed reaction is (9S)-hydroperoxy-(10E,12Z)-octadecadienoate + 2 glutathione = (9S)-hydroxy-(10E,12Z)-octadecadienoate + glutathione disulfide + H2O. The enzyme catalyses (13S)-hydroperoxy-(9Z,11E)-octadecadienoate + 2 glutathione = (13S)-hydroxy-(9Z,11E)-octadecadienoate + glutathione disulfide + H2O. It catalyses the reaction (5S)-hydroperoxy-(6E,8Z,11Z,14Z)-eicosatetraenoate + 2 glutathione = (5S)-hydroxy-(6E,8Z,11Z,14Z)-eicosatetraenoate + glutathione disulfide + H2O. It carries out the reaction (12R)-hydroperoxy-(5Z,8Z,10E,14Z)-eicosatetraenoate + 2 glutathione = (12R)-hydroxy-(5Z,8Z,10E,14Z)-eicosatetraenoate + glutathione disulfide + H2O. The catalysed reaction is (12S)-hydroperoxy-(5Z,8Z,10E,14Z)-eicosatetraenoate + 2 glutathione = (12S)-hydroxy-(5Z,8Z,10E,14Z)-eicosatetraenoate + glutathione disulfide + H2O. The enzyme catalyses (15S)-hydroperoxy-(5Z,8Z,11Z,13E)-eicosatetraenoate + 2 glutathione = (15S)-hydroxy-(5Z,8Z,11Z,13E)-eicosatetraenoate + glutathione disulfide + H2O. It catalyses the reaction (5S)-hydroperoxy-(6E,8Z,11Z,14Z,17Z)-eicosapentaenoate + 2 glutathione = (5S)-hydroxy-(6E,8Z,11Z,14Z,17Z)-eicosapentaenoate + glutathione disulfide + H2O. It carries out the reaction (12S)-hydroperoxy-(5Z,8Z,10E,14Z,17Z)-eicosapentaenoate + 2 glutathione = (12S)-hydroxy-(5Z,8Z,10E,14Z,17Z)-eicosapentaenoate + glutathione disulfide + H2O. The catalysed reaction is (15S)-hydroperoxy-(5Z,8Z,11Z,13E,17Z)-eicosapentaenoate + 2 glutathione = (15S)-hydroxy-(5Z,8Z,11Z,13E,17Z)-eicosapentaenoate + glutathione disulfide + H2O. The enzyme catalyses (15S)-hydroperoxy-(11Z,13E)-eicosadienoate + 2 glutathione = (15S)-hydroxy-(11Z,13E)-eicosadienoate + glutathione disulfide + H2O. It catalyses the reaction (17S)-hydroperoxy-(4Z,7Z,10Z,13Z,15E,19Z)-docosahexaenoate + 2 glutathione = (17S)-hydroxy-(4Z,7Z,10Z,13Z,15E,19Z)-docosahexaenoate + glutathione disulfide + H2O. It carries out the reaction a hydroperoxy-1,2-diacyl-glycero-3-phosphocholine + 2 glutathione = a hydroxy-1,2-diacyl-glycero-3-phosphocholine + glutathione disulfide + H2O. In terms of biological role, essential antioxidant peroxidase that directly reduces phospholipid hydroperoxide even if they are incorporated in membranes and lipoproteins. Can also reduce fatty acid hydroperoxide, cholesterol hydroperoxide and thymine hydroperoxide. Plays a key role in protecting cells from oxidative damage by preventing membrane lipid peroxidation. Required to prevent cells from ferroptosis, a non-apoptotic cell death resulting from an iron-dependent accumulation of lipid reactive oxygen species. The presence of selenocysteine (Sec) versus Cys at the active site is essential for life: it provides resistance to overoxidation and prevents cells against ferroptosis. The presence of Sec at the active site is also essential for the survival of a specific type of parvalbumin-positive interneurons, thereby preventing against fatal epileptic seizures. May be required to protect cells from the toxicity of ingested lipid hydroperoxides. Required for normal sperm development and male fertility. Essential for maturation and survival of photoreceptor cells. Plays a role in a primary T-cell response to viral and parasitic infection by protecting T-cells from ferroptosis and by supporting T-cell expansion. Plays a role of glutathione peroxidase in platelets in the arachidonic acid metabolism. Reduces hydroperoxy ester lipids formed by a 15-lipoxygenase that may play a role as down-regulator of the cellular 15-lipoxygenase pathway. Can also reduce small soluble hydroperoxides such as H2O2 and tert-butyl hydroperoxide. Its function is as follows. Specifically able to suppress the production of leukotriene and prostaglandin in response to several stimuli by reducing fatty acid hydroperoxide. Functionally, specifically required to prevent mitochondrial cell death by mediating reduction of cardiolipin hydroperoxide. Also required for normal sperm development and male fertility. Required for male fertility by stabilizing the condensed chromatin in sperm nuclei. This chain is Phospholipid hydroperoxide glutathione peroxidase GPX4, found in Mus musculus (Mouse).